Consider the following 71-residue polypeptide: SPI-2 type 3 secretion system needle filament protein (71 aa).

This sequence belongs to the SctF family. The core secretion machinery of the T3SS is composed of approximately 20 different proteins, including cytoplasmic components, a base, an export apparatus and a needle. This subunit polymerizes and forms the helical needle filament.

The protein resides in the secreted. The protein localises to the cell surface. Functionally, component of the type III secretion system (T3SS), also called injectisome, which is used to inject bacterial effector proteins into eukaryotic host cells. SsaG/SctF2 forms the external needle filament that protrudes from the bacterial surface. In terms of biological role, during infection, can induce innate immune responses. The needle proteins interact with host TLR2 or TLR4, and induce signaling by NF-kappa-B and/or AP-1. This activation is MyD88 dependent and results in increased expression of cytokines, including TNF-alpha, IL-6 and IL-8. The chain is SPI-2 type 3 secretion system needle filament protein from Salmonella typhimurium (strain LT2 / SGSC1412 / ATCC 700720).